A 607-amino-acid polypeptide reads, in one-letter code: MIELRHEVQGDLVTINVVEHPEDLDGFRDFIRAHQNCLAVDTETTGLDIYSADFRCRLVQFGTQTESWVLPIEDLEMLGREEVHEALDVLNKIVMQNASYDLQVLDRCFGIKMESLWPKILDTQILAKLVDPRPFGAGGFGHSLEELIAEFISKEQAENVKGLMAKLAKEHKTTKAKIWSTIDLYHPEYLTYAGMDTVFTARICSALAPLVPDVSRPLVPYEHKISEICSYIDRRGFLLDVEYSQQLADKWLGEQQVWEAVLLNEYGIEKVNATEDVAEAFEELGHKFTAFTDSGKRKVDKGFYADMIAAGGEKAHLAEMVQEAKKLGKWRTSWVQTFLDTRDSEDRCHTFVNPLQARTSRMSITGIPAQTLPASDWTVRRCFLADPGHVMASIDYQAQELRVLAALSGDRTMIQAFKDGADLHLMTARAAFGDHITKDDPERKYAKTVNFGRVYGGGANTVAEQTGISIETAKQVVDGFDKAYPGVTRYSRKLANEAKRNGYIINPMGRRLPVDRSRTYSALNYQIQSTSRDVTCKALIRLHEAGFTPYLRLPIHDEIVASLPAEKANWGAREIARLMAEEMGPVLIGTDPEVGKRSWGSLYGADY.

The 3'-5' exonuclease domain occupies 1 to 213; that stretch reads MIELRHEVQG…CSALAPLVPD (213 aa). The segment at 214–607 is polymerase; the sequence is VSRPLVPYEH…SWGSLYGADY (394 aa).

This sequence belongs to the DNA polymerase type-A family.

It catalyses the reaction DNA(n) + a 2'-deoxyribonucleoside 5'-triphosphate = DNA(n+1) + diphosphate. Its function is as follows. Replicates viral genomic DNA. This polymerase possesses two enzymatic activities: DNA synthesis (polymerase) and an exonucleolytic activity that degrades single-stranded DNA in the 3'-5' direction. This Mycobacterium phage D29 (Mycobacteriophage D29) protein is DNA polymerase (44).